The chain runs to 502 residues: Cytochrome P450 71B20 (502 aa).

Residues 1–21 (MAISFLCFCLITLASLIFFAK) traverse the membrane as a helical segment. Position 444 (cysteine 444) interacts with heme.

This sequence belongs to the cytochrome P450 family. Requires heme as cofactor.

It localises to the membrane. This is Cytochrome P450 71B20 (CYP71B20) from Arabidopsis thaliana (Mouse-ear cress).